A 431-amino-acid chain; its full sequence is uncharacterized protein (431 aa).

This is an uncharacterized protein from Caenorhabditis elegans.